The chain runs to 375 residues: Acetylornithine aminotransferase (375 aa).

Pyridoxal 5'-phosphate contacts are provided by residues 93–94 and Phe120; that span reads GT. Arg123 provides a ligand contact to N(2)-acetyl-L-ornithine. 205–208 contacts pyridoxal 5'-phosphate; that stretch reads DEVQ. At Lys234 the chain carries N6-(pyridoxal phosphate)lysine. Residue Thr262 coordinates N(2)-acetyl-L-ornithine. Position 263 (Thr263) interacts with pyridoxal 5'-phosphate.

It belongs to the class-III pyridoxal-phosphate-dependent aminotransferase family. ArgD subfamily. In terms of assembly, homodimer. It depends on pyridoxal 5'-phosphate as a cofactor.

The protein resides in the cytoplasm. The catalysed reaction is N(2)-acetyl-L-ornithine + 2-oxoglutarate = N-acetyl-L-glutamate 5-semialdehyde + L-glutamate. Its pathway is amino-acid biosynthesis; L-arginine biosynthesis; N(2)-acetyl-L-ornithine from L-glutamate: step 4/4. This chain is Acetylornithine aminotransferase, found in Staphylococcus epidermidis (strain ATCC 35984 / DSM 28319 / BCRC 17069 / CCUG 31568 / BM 3577 / RP62A).